A 126-amino-acid polypeptide reads, in one-letter code: Thioredoxin domain-containing protein, mitochondrial (126 aa).

The Thioredoxin domain occupies 14–120; it reads SQKIATNTSF…ILEFLNHIET (107 aa).

The protein belongs to the thioredoxin family.

The protein resides in the mitochondrion. The chain is Thioredoxin domain-containing protein, mitochondrial from Dictyostelium discoideum (Social amoeba).